The chain runs to 110 residues: uncharacterized protein (110 aa).

Belongs to the HesB/IscA family.

This is an uncharacterized protein from Rickettsia prowazekii (strain Madrid E).